The chain runs to 109 residues: Nucleoid-associated protein Sbal223_1770 (109 aa).

Belongs to the YbaB/EbfC family. As to quaternary structure, homodimer.

The protein resides in the cytoplasm. The protein localises to the nucleoid. Functionally, binds to DNA and alters its conformation. May be involved in regulation of gene expression, nucleoid organization and DNA protection. This Shewanella baltica (strain OS223) protein is Nucleoid-associated protein Sbal223_1770.